A 359-amino-acid chain; its full sequence is DNA replication and repair protein RecF (359 aa).

Residue 30 to 37 (GPNGSGKT) coordinates ATP.

The protein belongs to the RecF family.

The protein localises to the cytoplasm. Its function is as follows. The RecF protein is involved in DNA metabolism; it is required for DNA replication and normal SOS inducibility. RecF binds preferentially to single-stranded, linear DNA. It also seems to bind ATP. The protein is DNA replication and repair protein RecF of Aliivibrio salmonicida (strain LFI1238) (Vibrio salmonicida (strain LFI1238)).